The following is a 585-amino-acid chain: Protein DENND6B (585 aa).

Low complexity predominate over residues 1–10 (MEVPVGPGPR). The tract at residues 1-25 (MEVPVGPGPRQAGGGLGATRSSSSG) is disordered. Positions 43-221 (ECVCVVTFDL…IQVRIPSRVD (179 aa)) constitute a uDENN domain. The 128-residue stretch at 246 to 373 (VHELDLFRCF…VKLKKPSRLK (128 aa)) folds into the cDENN domain. In terms of domain architecture, dDENN spans 375-499 (LDTKPGLYTS…KSPHFDGWYR (125 aa)).

It belongs to the DENND6 family.

It is found in the recycling endosome. It localises to the cytoplasm. Functionally, guanine nucleotide exchange factor (GEF) for RAB14. Also has some, lesser GEF activity towards RAB35. This chain is Protein DENND6B (Dennd6b), found in Mus musculus (Mouse).